An 86-amino-acid chain; its full sequence is Superoxide dismutase [Cu-Zn] (86 aa).

Positions 1–26 (AKEKGGKLTAGLAAGGHWNPNKAPHH) are disordered. Low complexity predominate over residues 7-16 (KLTAGLAAGG). A Cu cation-binding site is contributed by His17. Residues His17, His26, His35, and Asp38 each coordinate Zn(2+). His73 is a Cu cation binding site.

It belongs to the Cu-Zn superoxide dismutase family. Homodimer. Cu cation serves as cofactor. It depends on Zn(2+) as a cofactor.

It is found in the periplasm. The enzyme catalyses 2 superoxide + 2 H(+) = H2O2 + O2. Functionally, destroys radicals which are normally produced within the cells and which are toxic to biological systems. The protein is Superoxide dismutase [Cu-Zn] (sodC) of Mannheimia haemolytica (Pasteurella haemolytica).